A 220-amino-acid chain; its full sequence is Pro-Pro endopeptidase (220 aa).

A signal peptide spans 1-26 (MRPSKKLLIAIISIFLISSVPVSAHA). An ATLF-like domain is found at 35-220 (KDTLSQIVVF…TYSFLQNLAK (186 aa)). Interacts with substrate peptide regions lie at residues 101–103 (KGW) and 117–119 (GGS). His-142 contacts Zn(2+). Glu-143 serves as the catalytic Proton acceptor. The Zn(2+) site is built by His-146, Tyr-178, and Glu-185.

Belongs to the peptidase M34 family. Pro-Pro endopeptidase subfamily. In terms of assembly, monomer. Zn(2+) is required as a cofactor.

It localises to the secreted. The catalysed reaction is The enzyme catalyzes the hydrolytic cleavage of peptide bonds between two proline residues.. Is inhibited by the chelating agent o-phenanthroline in vitro. In terms of biological role, zinc-dependent endoprotease with a unique preference for proline residues surrounding the scissile bond. Exhibits a high preference for an asparagine at the P2 position and hydrophobic residues (Val, Ile, Leu) at the P3 position. Efficiently cleaves the LPXTG cell surface proteins CD630_28310 and CD630_32460 at multiple cleavage sites in vivo. Has a role in the regulation of C.difficile adhesion versus motility by cleaving surface adhesion proteins such as the collagen binding protein CD630_28310, and is important for efficient infection. Is also able to cleave fibronectin and fibrinogen in vitro; cleaves at the N-terminus of the beta-chain of fibrinogen. Destabilizes the fibronectin network produced by human fibroblasts. Therefore, may be important in key steps of clostridial pathogenesis by degrading extracellular matrix components associated with the gut epithelial cells. To a lesser extent, IgA1, IgA2, and human HSP 90-beta, but not HSP 90-alpha, are also substrates for the enzyme. Is not active on different collagen types, casein and gelatin. The sequence is that of Pro-Pro endopeptidase from Clostridioides difficile (strain 630) (Peptoclostridium difficile).